Consider the following 3625-residue polypeptide: Cubilin (3625 aa).

The signal sequence occupies residues 1–20; the sequence is MVNNMSLLFLWSLVIFLTFA. Residues 21-36 constitute a propeptide, removed in mature form; that stretch reads ESYGEAGGPELQRHKR. The interval 43–50 is interaction with AMN; it reads PRMAAERG. N-linked (GlcNAc...) asparagine glycosylation occurs at asparagine 106. Positions 133-169 constitute an EGF-like 1 domain; sequence DGKVCSSNPCQNGATCLNLHDSFFCICPSQWKGPLCS. 6 disulfides stabilise this stretch: cysteine 137/cysteine 148, cysteine 142/cysteine 157, cysteine 159/cysteine 168, cysteine 175/cysteine 191, cysteine 185/cysteine 200, and cysteine 202/cysteine 211. The EGF-like 2; calcium-binding domain occupies 171–212; that stretch reads DVNECEIYSGTPLGCQNGATCINTPGSYSCLCSPETHGPQCA. The N-linked (GlcNAc...) asparagine glycan is linked to asparagine 257. An EGF-like 3; calcium-binding domain is found at 264 to 305; that stretch reads DRDECSSWPAPCSALVPCFNTLGSFYCGACPTGWQGNGYICE. Disulfide bonds link cysteine 268/cysteine 281, cysteine 275/cysteine 290, cysteine 293/cysteine 304, cysteine 310/cysteine 325, cysteine 317/cysteine 334, cysteine 337/cysteine 348, cysteine 354/cysteine 367, cysteine 361/cysteine 377, cysteine 379/cysteine 393, cysteine 400/cysteine 410, cysteine 405/cysteine 419, cysteine 421/cysteine 430, cysteine 437/cysteine 448, cysteine 442/cysteine 457, cysteine 459/cysteine 468, cysteine 475/cysteine 501, cysteine 528/cysteine 550, cysteine 591/cysteine 617, cysteine 644/cysteine 666, and cysteine 709/cysteine 734. Positions 306 to 349 constitute an EGF-like 4; calcium-binding domain; the sequence is DINECEINNGGCSVAPPVECVNTPGSYYCPSCPPGYQGDGRMCT. EGF-like domains lie at 350–394 and 396–431; these read LIDL…HGCV and LSNV…MNCT. N-linked (GlcNAc...) asparagine glycosylation is present at asparagine 429. The EGF-like 7; calcium-binding domain occupies 433 to 469; it reads NINECLSNPCLNGGTCVDGINAFSCECTRFWTGSLCH. 27 consecutive CUB domains span residues 475–587, 591–703, 709–816, 817–928, 932–1042, 1045–1163, 1167–1279, 1280–1391, 1393–1508, 1512–1621, 1622–1736, 1740–1852, 1854–1965, 1980–2093, 2094–2215, 2219–2336, 2338–2450, 2454–2567, 2572–2689, 2691–2803, 2807–2921, 2922–3037, 3039–3152, 3159–3276, 3280–3397, 3397–3509, and 3513–3625; these read CGGT…WETR, CGGV…YLTT, CGGN…YQVA, CGGE…FSTE, CGEI…YEAT, SAGN…WDGS, CGGN…YQQT, CDNV…WLVH, CGGE…WRAV, CGGI…FRQA, CGGH…YVAS, CGGI…FNNI, GNDH…WFAM, CGGF…FHKS, CGGY…YEAK, CGGN…YSIA, CGGT…FDSS, CGGD…YTSS, CGGS…YSFT, CGGI…WNTE, CGGI…FLSR, CGRN…YRIT, CGGT…FRET, CGGY…YTLL, CGGT…IAGC, CSRE…WTSS, and CGGT…TWAS. N-linked (GlcNAc...) asparagine glycosylation is found at asparagine 712 and asparagine 749. A disulfide bridge links cysteine 761 with cysteine 779. Residue asparagine 781 is glycosylated (N-linked (GlcNAc...) asparagine). Cysteine 817 and cysteine 842 are joined by a disulfide. N-linked (GlcNAc...) asparagine glycosylation occurs at asparagine 857. 2 disulfide bridges follow: cysteine 869–cysteine 891 and cysteine 932–cysteine 958. Residue asparagine 957 is glycosylated (N-linked (GlcNAc...) asparagine). Glutamate 980 lines the Ca(2+) pocket. A glycan (N-linked (GlcNAc...) asparagine) is linked at asparagine 984. Cysteine 985 and cysteine 1005 are disulfide-bonded. The Ca(2+) site is built by aspartate 988, aspartate 1027, aspartate 1029, and leucine 1030. N-linked (GlcNAc...) asparagine glycosylation occurs at asparagine 1048. Positions 1097, 1107, and 1148 each coordinate Ca(2+). A disulfide bridge connects residues cysteine 1104 and cysteine 1126. A disulfide bridge connects residues cysteine 1167 and cysteine 1193. N-linked (GlcNAc...) asparagine glycosylation occurs at asparagine 1170. Residue glutamate 1215 coordinates Ca(2+). N-linked (GlcNAc...) asparagine glycosylation is present at asparagine 1219. The cysteines at positions 1220 and 1242 are disulfide-linked. Ca(2+) contacts are provided by aspartate 1223, aspartate 1264, glycine 1266, and glutamine 1267. Cysteine 1280 and cysteine 1308 are disulfide-bonded. Asparagine 1287, asparagine 1309, and asparagine 1321 each carry an N-linked (GlcNAc...) asparagine glycan. Glutamate 1330 is a binding site for Ca(2+). Residue asparagine 1334 is glycosylated (N-linked (GlcNAc...) asparagine). A disulfide bridge links cysteine 1335 with cysteine 1353. Ca(2+)-binding residues include aspartate 1338, aspartate 1375, and valine 1377. 2 disulfide bridges follow: cysteine 1393/cysteine 1419 and cysteine 1446/cysteine 1468. The N-linked (GlcNAc...) asparagine glycan is linked to asparagine 1502. Cysteine 1512 and cysteine 1538 are oxidised to a cystine. Asparagine 1553 carries N-linked (GlcNAc...) asparagine glycosylation. Disulfide bonds link cysteine 1565–cysteine 1583, cysteine 1622–cysteine 1649, cysteine 1677–cysteine 1699, cysteine 1740–cysteine 1766, and cysteine 1793–cysteine 1814. N-linked (GlcNAc...) asparagine glycosylation occurs at asparagine 1648. 3 N-linked (GlcNAc...) asparagine glycosylation sites follow: asparagine 1804, asparagine 1821, and asparagine 1887. Disulfide bonds link cysteine 1907–cysteine 1929, cysteine 1980–cysteine 2008, and cysteine 2034–cysteine 2056. 2 N-linked (GlcNAc...) asparagine glycosylation sites follow: asparagine 2087 and asparagine 2119. Cystine bridges form between cysteine 2094–cysteine 2120 and cysteine 2219–cysteine 2249. Asparagine 2276 carries an N-linked (GlcNAc...) asparagine glycan. 2 disulfides stabilise this stretch: cysteine 2277/cysteine 2299 and cysteine 2338/cysteine 2365. Asparagine 2388 and asparagine 2402 each carry an N-linked (GlcNAc...) asparagine glycan. 3 cysteine pairs are disulfide-bonded: cysteine 2392–cysteine 2413, cysteine 2454–cysteine 2480, and cysteine 2507–cysteine 2529. N-linked (GlcNAc...) asparagine glycosylation is found at asparagine 2533, asparagine 2583, asparagine 2594, and asparagine 2612. The cysteines at positions 2572 and 2601 are disulfide-linked. Disulfide bonds link cysteine 2630/cysteine 2651, cysteine 2691/cysteine 2717, cysteine 2744/cysteine 2766, cysteine 2807/cysteine 2833, and cysteine 2862/cysteine 2885. N-linked (GlcNAc...) asparagine glycosylation is found at asparagine 2887, asparagine 2925, asparagine 2928, and asparagine 2947. Cystine bridges form between cysteine 2922/cysteine 2948 and cysteine 2979/cysteine 3001. Position 3010 is a phosphothreonine (threonine 3010). Disulfide bonds link cysteine 3039–cysteine 3066 and cysteine 3093–cysteine 3115. Asparagine 3044, asparagine 3105, and asparagine 3127 each carry an N-linked (GlcNAc...) asparagine glycan. 2 cysteine pairs are disulfide-bonded: cysteine 3159-cysteine 3187 and cysteine 3217-cysteine 3239. N-linked (GlcNAc...) asparagine glycans are attached at residues asparagine 3270 and asparagine 3285. 2 cysteine pairs are disulfide-bonded: cysteine 3280–cysteine 3308 and cysteine 3334–cysteine 3356. N-linked (GlcNAc...) asparagine glycosylation occurs at asparagine 3359. Cysteine 3397 and cysteine 3423 are disulfide-bonded. Residues asparagine 3432, asparagine 3459, and asparagine 3535 are each glycosylated (N-linked (GlcNAc...) asparagine). Cystine bridges form between cysteine 3450/cysteine 3472, cysteine 3513/cysteine 3539, and cysteine 3566/cysteine 3588.

In terms of assembly, interacts with AMN. Component of the cubam complex composed of one CUBN trimer and one AMN chain. The cubam complex can dimerize. Interacts with LRP2 in a dual-receptor complex in a calcium-dependent manner. Found in a complex with PID1/PCLI1, LRP1 and CUBNI. Interacts with LRP1 and PID1/PCLI1. The precursor is cleaved by a trans-Golgi proteinase furin, removing a propeptide. Post-translationally, N-glycosylated. As to expression, detected in kidney cortex (at protein level).

Its subcellular location is the apical cell membrane. It is found in the cell membrane. The protein resides in the membrane. The protein localises to the coated pit. It localises to the endosome. Its subcellular location is the lysosome membrane. Functionally, endocytic receptor which plays a role in lipoprotein, vitamin and iron metabolism by facilitating their uptake. Acts together with LRP2 to mediate endocytosis of high-density lipoproteins, GC, hemoglobin, ALB, TF and SCGB1A1. Acts together with AMN to mediate endocytosis of the CBLIF-cobalamin complex. Binds to ALB, MB, Kappa and lambda-light chains, TF, hemoglobin, GC, SCGB1A1, APOA1, high density lipoprotein, and the CBLIF-cobalamin complex. Ligand binding requires calcium. Serves as important transporter in several absorptive epithelia, including intestine, renal proximal tubules and embryonic yolk sac. May play an important role in the development of the peri-implantation embryo through internalization of APOA1 and cholesterol. Binds to LGALS3 at the maternal-fetal interface. The protein is Cubilin (CUBN) of Sus scrofa (Pig).